An 89-amino-acid chain; its full sequence is FXYD domain-containing ion transport regulator 4 (89 aa).

The signal sequence occupies residues 1–20 (MERVTLALLLLAGLTALEAN). At 21-38 (DPFANKDDPFYYDWKNLQ) the chain is on the extracellular side. Residues 39–59 (LSGLICGGLLAIAGIAAVLSG) traverse the membrane as a helical segment. Residues 60-89 (KCKCKSSQKQHSPVPEKAIPLITPGSATTC) are Cytoplasmic-facing.

The protein belongs to the FXYD family. As to quaternary structure, regulatory subunit of the sodium/potassium-transporting ATPase which is composed of a catalytic alpha subunit, a non-catalytic beta subunit and a regulatory subunit. The regulatory subunit, a member of the FXYD protein family, modulates the enzymatic activity in a tissue- and isoform-specific way by changing affinities of the Na+/K+-ATPase toward Na(+), K(+) or ATP.

It is found in the cell membrane. It localises to the basolateral cell membrane. In terms of biological role, associates with and regulates the activity of the sodium/potassium-transporting ATPase (NKA) which catalyzes the hydrolysis of ATP coupled with the exchange of Na(+) and K(+) ions across the plasma membrane. Increases the apparent affinity of the transporter for Na(+) and increases NKA activity. This chain is FXYD domain-containing ion transport regulator 4 (FXYD4), found in Homo sapiens (Human).